Consider the following 222-residue polypeptide: Physcion biosynthesis cluster O-methyltransferase (222 aa).

This sequence belongs to the methyltransferase superfamily.

It catalyses the reaction emodin + S-adenosyl-L-methionine = physcion + S-adenosyl-L-homocysteine. It functions in the pathway secondary metabolite biosynthesis. Its function is as follows. O-methyltransferase; part of the gene cluster that mediates the biosynthesis of physcion, a natural anthraquinone fungicide that can prevent plant fungal infections. Within the pathway, the O-methyltransferase AcOMT catalyzes the last step by transferring a methyl group to C-6 hydroxyl of emodin to form physcion. AcOMT may also methylate the C-6 hydroxyl group of emodin anthrone to produce physcion-anthrone B. The pathway begins with the polyketide synthase AcPKS that condenses 8 malonyl-CoA units to synthesize atrochrysone thioester which is released from the synthase by the atrochrysone carboxyl ACP thioesterase AcTE that breaks the thioester bond and leads to free atrochrysone carboxylic acid. Spontaneous decarboxylation of atrochrysone carboxylic acid leads to the formation of atrochrysone. Then, atrochrysone undergoes spontaneous dehydration and oxidation, giving the products emodin anthrone and emodin. The O-methyltransferase AcOMT then methylates the C-6 hydroxyl of emodin to form physcion. The polypeptide is Physcion biosynthesis cluster O-methyltransferase (Aspergillus chevalieri (Eurotium chevalieri)).